The primary structure comprises 291 residues: MFKGSCVALITPFTEDGVNYEELRKLLEWHIKNHTDAILVCGTTGEGSTMTLEEKKEVIKFSVEVVNKRVPVIAGTGTNNTKASIELSKYAEEVGADMVLIITPYYNKTSQKGLYAHFSAINDAINIPIMLYNVPSRTGMNITPLMLDKLADLNNVVAIKEASGDLSQVAKMAELCGDRIAIYSGNDDQIVPILSLGGAGVVSVLANILPEETHNICEKYFLGEVIESRNLQLKYLSLANSLFIETNPIPVKTAMNLMNFNCGPLRLPLCEMEDSNLIILEENLKANGLIK.

T44 is a pyruvate binding site. Y132 acts as the Proton donor/acceptor in catalysis. K160 serves as the catalytic Schiff-base intermediate with substrate. V202 serves as a coordination point for pyruvate.

The protein belongs to the DapA family. As to quaternary structure, homotetramer; dimer of dimers.

Its subcellular location is the cytoplasm. It carries out the reaction L-aspartate 4-semialdehyde + pyruvate = (2S,4S)-4-hydroxy-2,3,4,5-tetrahydrodipicolinate + H2O + H(+). The protein operates within amino-acid biosynthesis; L-lysine biosynthesis via DAP pathway; (S)-tetrahydrodipicolinate from L-aspartate: step 3/4. In terms of biological role, catalyzes the condensation of (S)-aspartate-beta-semialdehyde [(S)-ASA] and pyruvate to 4-hydroxy-tetrahydrodipicolinate (HTPA). In Clostridium perfringens (strain 13 / Type A), this protein is 4-hydroxy-tetrahydrodipicolinate synthase.